A 500-amino-acid chain; its full sequence is Guanosine-5'-triphosphate,3'-diphosphate pyrophosphatase (500 aa).

Belongs to the GppA/Ppx family. GppA subfamily.

The enzyme catalyses guanosine 3'-diphosphate 5'-triphosphate + H2O = guanosine 3',5'-bis(diphosphate) + phosphate + H(+). It functions in the pathway purine metabolism; ppGpp biosynthesis; ppGpp from GTP: step 2/2. Catalyzes the conversion of pppGpp to ppGpp. Guanosine pentaphosphate (pppGpp) is a cytoplasmic signaling molecule which together with ppGpp controls the 'stringent response', an adaptive process that allows bacteria to respond to amino acid starvation, resulting in the coordinated regulation of numerous cellular activities. The polypeptide is Guanosine-5'-triphosphate,3'-diphosphate pyrophosphatase (Photorhabdus laumondii subsp. laumondii (strain DSM 15139 / CIP 105565 / TT01) (Photorhabdus luminescens subsp. laumondii)).